A 230-amino-acid polypeptide reads, in one-letter code: C-methyltransferase CouO (230 aa).

Belongs to the methyltransferase superfamily.

It functions in the pathway antibiotic biosynthesis. Its function is as follows. Mediates C-methylation at the 8-position of the aminocoumarin moieties in coumermycin A1 in the biosynthetic pathway of coumermycin antibiotic. Active on both mono- and bis-amides for mono- and di-C-methylation adjacent to the phenolic hydroxyl before it is glycosylated by CouM. This Streptomyces rishiriensis protein is C-methyltransferase CouO (couO).